The primary structure comprises 92 residues: uncharacterized protein (92 aa).

The next 3 helical transmembrane spans lie at 1-21 (MEVLPLVSGICCILGGIGVIL), 29-49 (IIMLALLEIGMIGLIVSCYYL), and 51-71 (IAIVSSLCEPICTVILLLGYL).

It is found in the cell membrane. This is an uncharacterized protein from Methanocaldococcus jannaschii (strain ATCC 43067 / DSM 2661 / JAL-1 / JCM 10045 / NBRC 100440) (Methanococcus jannaschii).